Reading from the N-terminus, the 21-residue chain is Fibrinogen beta chain (21 aa).

The residue at position 1 (Gln1) is a Pyrrolidone carboxylic acid. The segment covering 1–10 (QFPTDYDEGQ) has biased composition (acidic residues). The tract at residues 1–21 (QFPTDYDEGQDDRPKLGLGAR) is disordered. Residue Thr4 is glycosylated (O-linked (GalNAc...) threonine). A Sulfotyrosine modification is found at Tyr6.

In terms of assembly, heterohexamer; disulfide linked. Contains 2 sets of 3 non-identical chains (alpha, beta and gamma). The 2 heterotrimers are in head to head conformation with the N-termini in a small central domain. Conversion of fibrinogen to fibrin is triggered by thrombin, which cleaves fibrinopeptides A and B from alpha and beta chains, and thus exposes the N-terminal polymerization sites responsible for the formation of the soft clot.

The protein resides in the secreted. Cleaved by the protease thrombin to yield monomers which, together with fibrinogen alpha (FGA) and fibrinogen gamma (FGG), polymerize to form an insoluble fibrin matrix. Fibrin has a major function in hemostasis as one of the primary components of blood clots. In addition, functions during the early stages of wound repair to stabilize the lesion and guide cell migration during re-epithelialization. Was originally thought to be essential for platelet aggregation, based on in vitro studies using anticoagulated blood. However subsequent studies have shown that it is not absolutely required for thrombus formation in vivo. Enhances expression of SELP in activated platelets. Maternal fibrinogen is essential for successful pregnancy. Fibrin deposition is also associated with infection, where it protects against IFNG-mediated hemorrhage. May also facilitate the antibacterial immune response via both innate and T-cell mediated pathways. The chain is Fibrinogen beta chain (FGB) from Bubalus bubalis (Domestic water buffalo).